The primary structure comprises 253 residues: CD151 antigen (253 aa).

At 1-18 (MGEFNEKKATCGTVCLKY) the chain is on the cytoplasmic side. 2 S-palmitoyl cysteine lipidation sites follow: cysteine 11 and cysteine 15. Residues 19–39 (LLFTYNCCFWLAGLAVMAVGI) traverse the membrane as a helical segment. Topologically, residues 40–57 (WTLALKSDYISLLASSTY) are extracellular. Residues 58–78 (LATAYILVVAGVVVMVTGVLG) form a helical membrane-spanning segment. The Cytoplasmic portion of the chain corresponds to 79 to 91 (CCATFKERRNLLR). The helical transmembrane segment at 92-112 (LYFILLLIIFLLEIIAGILAY) threads the bilayer. The Extracellular segment spans residues 113–221 (VYYQQLNTEL…LESFIQEHLR (109 aa)). Asparagine 159 is a glycosylation site (N-linked (GlcNAc...) asparagine). The helical transmembrane segment at 222-242 (VIGAVGIGIACVQVFGMIFTC) threads the bilayer. Residues cysteine 242 and cysteine 243 are each lipidated (S-palmitoyl cysteine). The Cytoplasmic portion of the chain corresponds to 243 to 253 (CLYRSLKLEHY).

This sequence belongs to the tetraspanin (TM4SF) family. Interacts with integrins ITGA3:ITGB1, ITGA5:ITGB1, ITGA3:ITGB1 and ITGA6:ITGB4 and with CD9 and CD181. Interacts (via the second extracellular domain) with integrin ITGAV:ITGB3. Interacts with ITGA3; this interaction modulates ITGA3 glycosylation pattern. Interacts with F11R. Interacts with RAC1 and CDC42; these interactions mediate physical association of RAC1 and CDC42 with integrin adhesion receptor complexes. Palmitoylated. Palmitoylation by ZDHHC2 regulates CD151 expression, association with other tetraspanin family proteins and function in cell adhesion. Post-translationally, ubiquitinated by RNF128 on lysine residues present in the tetraspanin amino terminus via 'Lys-48'-linked ubiquitin leading to proteasomal degradation.

The protein localises to the cell membrane. Structural component of specialized membrane microdomains known as tetraspanin-enriched microdomains (TERMs), which act as platforms for receptor clustering and signaling. Plays a role in various cellular and molecular mechanism through its association with both integrin and non-integrin proteins. These interactions facilitate critical cellular functions, including cell-to-cell communication, wound healing, platelet aggregation, trafficking, cell motility, and angiogenesis. Via interaction with JAM-A/F11R and integrin ITGA3:ITGB1, promotes the recruitment of signaling molecules such as RAC1, CDC42 and RhoGTPases to facilitate the polarization of epithelial cells and the reorganization of the actin cytoskeleton, which are critical steps in cell migration process. Regulates the glycosylation pattern of ITGA3:ITGB1 thereby modulating its activity. Plays an essential role in the maintenance of central laminin-binding integrin ITGA6:ITGB4-containing adhesion complexes. Essential for the proper assembly of the glomerular and tubular basement membranes in kidney. Contributes to T-cell activation by modulating integrin signaling leading to activation of downstream targets PTK2 and MAPK1/MAPK3. This Rattus norvegicus (Rat) protein is CD151 antigen (Cd151).